The chain runs to 151 residues: MDSPQKVVDHQPFCLSLKCFVKTLRLVVTVASMIFFIVAQAPEPYIVITGFEVTIILFLIALYMCSLDKTMRSFFWPLLDVINSVVTTLFMLIVSVSALIPETSTMIMVGGVFGFLTVICTVADCALMCQKLRFRPHGPYQNRSATDVDDS.

An MARVEL domain is found at 13 to 133 (FCLSLKCFVK…DCALMCQKLR (121 aa)). The next 4 membrane-spanning stretches (helical) occupy residues 19 to 39 (CFVK…FIVA), 45 to 65 (YIVI…LYMC), 74 to 94 (FFWP…MLIV), and 107 to 127 (IMVG…DCAL). N-linked (GlcNAc...) asparagine glycosylation is present at Asn-142.

The protein belongs to the chemokine-like factor family. In terms of tissue distribution, both isoforms have highest expression levels in testis with relatively lower expression level in liver, spleen, lung, brain and heart and barely detectable levels in skeletal muscle and kidney were barely detected. In most tissues, isoform CKLF2 has higher expression levels than isoform CKLF1.

It localises to the secreted. It is found in the membrane. Functionally, may play an important role in inflammation and regeneration of skeletal muscle. Essential for embryonic development. In terms of biological role, has chemotactic response in monocytes, neutrophils and lymphocytes. Binds CCR4. The protein is Chemokine-like factor (Cklf) of Rattus norvegicus (Rat).